Reading from the N-terminus, the 524-residue chain is Cytochrome P450 4F1 (524 aa).

The chain crosses the membrane as a helical span at residues 15–35; the sequence is VAFPWQTLLLFGASWILAQIL. Residues Glu-328 and Cys-468 each coordinate heme.

The protein belongs to the cytochrome P450 family. It depends on heme as a cofactor. Expressed in liver.

The protein resides in the endoplasmic reticulum membrane. Its subcellular location is the microsome membrane. The enzyme catalyses (5Z,8Z,11Z,14Z)-eicosatetraenoate + reduced [NADPH--hemoprotein reductase] + O2 = 20-hydroxy-(5Z,8Z,11Z,14Z)-eicosatetraenoate + oxidized [NADPH--hemoprotein reductase] + H2O + H(+). It catalyses the reaction 5-hydroxy-(6E,8Z,11Z,14Z)-eicosatetraenoate + reduced [NADPH--hemoprotein reductase] + O2 = 5,20-dihydroxy-(6E,8Z,11Z,14Z)-eicosatetraenoate + oxidized [NADPH--hemoprotein reductase] + H2O + H(+). The catalysed reaction is 8-hydroxy-(5Z,9E,11Z,14Z)-eicosatetraenoate + reduced [NADPH--hemoprotein reductase] + O2 = 8,20-dihydroxy-(5Z,9E,11Z,14Z)-eicosatetraenoate + oxidized [NADPH--hemoprotein reductase] + H2O + H(+). It carries out the reaction leukotriene B4 + reduced [NADPH--hemoprotein reductase] + O2 = 20-hydroxy-leukotriene B4 + oxidized [NADPH--hemoprotein reductase] + H2O + H(+). The enzyme catalyses 6-trans-leukotriene B4 + reduced [NADPH--hemoprotein reductase] + O2 = 20-hydroxy-6-trans-leukotriene B4 + oxidized [NADPH--hemoprotein reductase] + H2O + H(+). It catalyses the reaction lipoxin A4 + reduced [NADPH--hemoprotein reductase] + O2 = 20-hydroxy-lipoxin A4 + oxidized [NADPH--hemoprotein reductase] + H2O + H(+). Functionally, a cytochrome P450 monooxygenase involved in the metabolism of arachidonic acid and its oxygenated derivatives. Mechanistically, uses molecular oxygen inserting one oxygen atom into a substrate, and reducing the second into a water molecule, with two electrons provided by NADPH via cytochrome P450 reductase (CPR; NADPH-ferrihemoprotein reductase). Participates in the conversion of arachidonic acid to omega-hydroxyeicosatetraenoic acid (20-HETE), a signaling molecule acting both as vasoconstrictive and natriuretic with overall effect on arterial blood pressure. May play a role in the oxidative inactivation of eicosanoids, including both pro-inflammatory and anti-inflammatory mediators such as leukotriene B4 (LTB4), lipoxin A4 (LXA4), and several HETEs. In Rattus norvegicus (Rat), this protein is Cytochrome P450 4F1.